The chain runs to 82 residues: UPF0512 protein P (82 aa).

The protein belongs to the UPF0512 family.

This Dictyostelium discoideum (Social amoeba) protein is UPF0512 protein P.